Consider the following 531-residue polypeptide: Na(+)/H(+) antiporter NhaB (531 aa).

Transmembrane regions (helical) follow at residues 13–33 (FLGK…IINP), 34–54 (LVFF…EFIF), 90–110 (LVAN…IYFM), 121–141 (ILIG…TAAF), 145–165 (FLDA…FYAI), 206–226 (LLMH…VGEP), 242–262 (FIIR…LTCV), 308–328 (VIAV…GLIG), 352–372 (EEAL…AVII), 394–414 (LALF…VFVG), 456–476 (GQAA…QLSY), and 482–502 (MALP…SFLL).

Belongs to the NhaB Na(+)/H(+) (TC 2.A.34) antiporter family.

It localises to the cell inner membrane. The catalysed reaction is 2 Na(+)(in) + 3 H(+)(out) = 2 Na(+)(out) + 3 H(+)(in). Na(+)/H(+) antiporter that extrudes sodium in exchange for external protons. The sequence is that of Na(+)/H(+) antiporter NhaB from Aliivibrio salmonicida (strain LFI1238) (Vibrio salmonicida (strain LFI1238)).